Consider the following 180-residue polypeptide: Crossover junction endodeoxyribonuclease RuvC (180 aa).

Residues Asp-7, Glu-66, and Asp-138 contribute to the active site. The Mg(2+) site is built by Asp-7, Glu-66, and Asp-138.

It belongs to the RuvC family. As to quaternary structure, homodimer which binds Holliday junction (HJ) DNA. The HJ becomes 2-fold symmetrical on binding to RuvC with unstacked arms; it has a different conformation from HJ DNA in complex with RuvA. In the full resolvosome a probable DNA-RuvA(4)-RuvB(12)-RuvC(2) complex forms which resolves the HJ. Mg(2+) is required as a cofactor.

The protein localises to the cytoplasm. The enzyme catalyses Endonucleolytic cleavage at a junction such as a reciprocal single-stranded crossover between two homologous DNA duplexes (Holliday junction).. Its function is as follows. The RuvA-RuvB-RuvC complex processes Holliday junction (HJ) DNA during genetic recombination and DNA repair. Endonuclease that resolves HJ intermediates. Cleaves cruciform DNA by making single-stranded nicks across the HJ at symmetrical positions within the homologous arms, yielding a 5'-phosphate and a 3'-hydroxyl group; requires a central core of homology in the junction. The consensus cleavage sequence is 5'-(A/T)TT(C/G)-3'. Cleavage occurs on the 3'-side of the TT dinucleotide at the point of strand exchange. HJ branch migration catalyzed by RuvA-RuvB allows RuvC to scan DNA until it finds its consensus sequence, where it cleaves and resolves the cruciform DNA. This Burkholderia thailandensis (strain ATCC 700388 / DSM 13276 / CCUG 48851 / CIP 106301 / E264) protein is Crossover junction endodeoxyribonuclease RuvC.